Reading from the N-terminus, the 388-residue chain is Succinate--CoA ligase [ADP-forming] subunit beta (388 aa).

The ATP-grasp domain maps to 9–244; the sequence is KEILRKYNVP…LDEEDANEIE (236 aa). Residues Lys-46, 53–55, Glu-99, Ala-102, and Glu-107 each bind ATP; that span reads GRG. Mg(2+)-binding residues include Asn-199 and Asp-213. Substrate is bound by residues Asn-264 and 321-323; that span reads GIM.

Belongs to the succinate/malate CoA ligase beta subunit family. Heterotetramer of two alpha and two beta subunits. Mg(2+) is required as a cofactor.

The catalysed reaction is succinate + ATP + CoA = succinyl-CoA + ADP + phosphate. The enzyme catalyses GTP + succinate + CoA = succinyl-CoA + GDP + phosphate. Its pathway is carbohydrate metabolism; tricarboxylic acid cycle; succinate from succinyl-CoA (ligase route): step 1/1. Functionally, succinyl-CoA synthetase functions in the citric acid cycle (TCA), coupling the hydrolysis of succinyl-CoA to the synthesis of either ATP or GTP and thus represents the only step of substrate-level phosphorylation in the TCA. The beta subunit provides nucleotide specificity of the enzyme and binds the substrate succinate, while the binding sites for coenzyme A and phosphate are found in the alpha subunit. This is Succinate--CoA ligase [ADP-forming] subunit beta from Cupriavidus taiwanensis (strain DSM 17343 / BCRC 17206 / CCUG 44338 / CIP 107171 / LMG 19424 / R1) (Ralstonia taiwanensis (strain LMG 19424)).